The following is a 213-amino-acid chain: AN1-type zinc finger protein 5 (213 aa).

The segment at 8 to 42 (TPGPMLCSTGCGFYGNPRTNGMCSVCYKEHLQRQQ) adopts an A20-type zinc-finger fold. Cysteine 14, cysteine 18, cysteine 30, and cysteine 33 together coordinate Zn(2+). Positions 39-149 (QRQQNSGRMS…EEKAPELPKP (111 aa)) are disordered. Positions 40 to 66 (RQQNSGRMSPMGTASGSNSPTSDSASV) are enriched in polar residues. Residues serine 48 and serine 58 each carry the phosphoserine modification. Residues 120 to 138 (SEPVVTQPSPSVSQPSSSQ) show a composition bias toward low complexity. The span at 139–148 (SEEKAPELPK) shows a compositional bias: basic and acidic residues. An AN1-type zinc finger spans residues 148-194 (KPKKNRCFMCRKKVGLTGFDCRCGNLFCGLHRYSDKHNCPYDYKAEA). Zn(2+)-binding residues include cysteine 154, cysteine 157, cysteine 168, cysteine 170, cysteine 175, histidine 178, histidine 184, and cysteine 186. Lysine 209 carries the post-translational modification N6-acetyllysine.

In terms of assembly, homooligomer and/or heterooligomer. Interacts (via A20-type domain) with IKBKG and RIPK1 and with TRAF6 (via AN1-type domain). Interacts with ubiquitin and polyubiquitinated proteins. Identified in a heterotrimeric complex with ubiquitin and SQSTM1, where ZFAND5 and SQSTM1 both interact with the same ubiquitin molecule.

The protein resides in the cytoplasm. In terms of biological role, involved in protein degradation via the ubiquitin-proteasome system. May act by anchoring ubiquitinated proteins to the proteasome. Plays a role in ubiquitin-mediated protein degradation during muscle atrophy. Plays a role in the regulation of NF-kappa-B activation and apoptosis. Inhibits NF-kappa-B activation triggered by overexpression of RIPK1 and TRAF6 but not of RELA. Also inhibits tumor necrosis factor (TNF), IL-1 and TLR4-induced NF-kappa-B activation in a dose-dependent manner. Overexpression sensitizes cells to TNF-induced apoptosis. Is a potent inhibitory factor for osteoclast differentiation. The protein is AN1-type zinc finger protein 5 (Zfand5) of Rattus norvegicus (Rat).